A 488-amino-acid polypeptide reads, in one-letter code: Ribulose bisphosphate carboxylase large chain (488 aa).

Asparagine 127 and threonine 177 together coordinate substrate. Residue lysine 179 is the Proton acceptor of the active site. Lysine 181 provides a ligand contact to substrate. 3 residues coordinate Mg(2+): lysine 205, aspartate 207, and glutamate 208. N6-carboxylysine is present on lysine 205. Residue histidine 297 is the Proton acceptor of the active site. Substrate-binding residues include arginine 298, histidine 330, and serine 382.

This sequence belongs to the RuBisCO large chain family. Type I subfamily. As to quaternary structure, heterohexadecamer of 8 large chains and 8 small chains. Mg(2+) serves as cofactor.

It is found in the plastid. The protein resides in the chloroplast. It catalyses the reaction 2 (2R)-3-phosphoglycerate + 2 H(+) = D-ribulose 1,5-bisphosphate + CO2 + H2O. The enzyme catalyses D-ribulose 1,5-bisphosphate + O2 = 2-phosphoglycolate + (2R)-3-phosphoglycerate + 2 H(+). In terms of biological role, ruBisCO catalyzes two reactions: the carboxylation of D-ribulose 1,5-bisphosphate, the primary event in carbon dioxide fixation, as well as the oxidative fragmentation of the pentose substrate in the photorespiration process. Both reactions occur simultaneously and in competition at the same active site. In Pyropia suborbiculata (Red alga), this protein is Ribulose bisphosphate carboxylase large chain.